The primary structure comprises 911 residues: Inter-alpha-trypsin inhibitor heavy chain H1 (911 aa).

The signal sequence occupies residues 1 to 27 (MDGAMGPRGLLLCMYLVSLLILQAMPA). A propeptide spanning residues 28-34 (LGSATGR) is cleaved from the precursor. The 130-residue stretch at 37 to 166 (SSEKRQAVDT…KVTFQLTYEE (130 aa)) folds into the VIT domain. A glycan (S-linked (Hex...) cysteine) is linked at cysteine 60. Serine 129 is modified (phosphoserine). The short motif at 181 to 184 (VKPK) is the Phagocytosis uptake signal element. 2 disulfide bridges follow: cysteine 244/cysteine 247 and cysteine 268/cysteine 540. The N-linked (GlcNAc...) (complex) asparagine glycan is linked to asparagine 285. Residues 290-450 (NKNVVFVIDI…FNFLEVMSME (161 aa)) enclose the VWFA domain. Residues 387–911 (SLPELSNHAS…YTDYIVPDIF (525 aa)) form a hyaluronan-binding region. Threonine 402 and threonine 407 each carry phosphothreonine. N-linked (GlcNAc...) (complex) asparagine glycosylation occurs at asparagine 588. The O-linked (GalNAc...) threonine glycan is linked to threonine 653. The residue at position 672 (aspartate 672) is an Aspartate 1-(chondroitin 4-sulfate)-ester. A propeptide spanning residues 673–911 (PHFIIHVPQK…YTDYIVPDIF (239 aa)) is cleaved from the precursor. The N-linked (GlcNAc...) asparagine glycan is linked to asparagine 750.

Belongs to the ITIH family. In terms of assembly, I-alpha-I plasma protease inhibitors are assembled from one or two heavy chains (HC) and one light chain, bikunin. Inter-alpha-inhibitor (I-alpha-I) is composed of ITIH1/HC1, ITIH2/HC2 and bikunin. Interacts with TNFAIP6 (via Link and CUB domains). Heavy chains are linked to bikunin via chondroitin 4-sulfate esterified to the alpha-carboxyl of the C-terminal aspartate after propeptide cleavage. Post-translationally, the S-linked glycan is composed of two 6-carbon sugars, possibly Glc or Gal.

It localises to the secreted. Functionally, may act as a carrier of hyaluronan in serum or as a binding protein between hyaluronan and other matrix protein, including those on cell surfaces in tissues to regulate the localization, synthesis and degradation of hyaluronan which are essential to cells undergoing biological processes. In terms of biological role, contains a potential peptide which could stimulate a broad spectrum of phagocytotic cells. The chain is Inter-alpha-trypsin inhibitor heavy chain H1 (ITIH1) from Homo sapiens (Human).